Consider the following 495-residue polypeptide: Lysine--tRNA ligase (495 aa).

The Mg(2+) site is built by Glu-406 and Glu-413.

It belongs to the class-II aminoacyl-tRNA synthetase family. In terms of assembly, homodimer. Mg(2+) is required as a cofactor.

It is found in the cytoplasm. It catalyses the reaction tRNA(Lys) + L-lysine + ATP = L-lysyl-tRNA(Lys) + AMP + diphosphate. The protein is Lysine--tRNA ligase of Staphylococcus epidermidis (strain ATCC 35984 / DSM 28319 / BCRC 17069 / CCUG 31568 / BM 3577 / RP62A).